The following is a 1139-amino-acid chain: Phospholipid-transporting ATPase tat-1 (1139 aa).

The next 3 helical transmembrane spans lie at 78-98 (YTTAVPFLIILSVSALKEIFE), 276-296 (IIFLFFVLVALALISATGSEI), and 318-338 (SFLWGVLTFFILYNNLIPISL). Catalysis depends on D388, which acts as the 4-aspartylphosphate intermediate. 6 helical membrane passes run 831-851 (ICLYIIELWFAMFSAWSGQTI), 855-875 (WTIGMFNVIFTAWPPVVLGLF), 901-921 (IGNFSLWIGLAIVHSLSLFFL), 935-955 (GLTGGWLMLGNCAYTFVVATV), 972-992 (VACIGSIGLWIVFVIVYSLVF), and 1013-1033 (YTFWLALLFIPLATLLWDLVI).

The protein belongs to the cation transport ATPase (P-type) (TC 3.A.3) family. Type IV subfamily.

Its subcellular location is the cell membrane. It is found in the early endosome membrane. The protein resides in the recycling endosome membrane. It carries out the reaction ATP + H2O + phospholipidSide 1 = ADP + phosphate + phospholipidSide 2.. The catalysed reaction is a 1,2-diacyl-sn-glycero-3-phospho-L-serine(out) + ATP + H2O = a 1,2-diacyl-sn-glycero-3-phospho-L-serine(in) + ADP + phosphate + H(+). Functionally, transports phosphatidylserine from the outer to the inner leaflet of the plasma membrane, thereby maintaining the enrichment of this phospholipid in the inner leaflet. Ectopic exposure of phosphatidylserine on the cell surface may result in removal of living cells by neighboring phagocytes. Regulation of the phosphatidylserine distribution in plasma membranes is likely to help in the maintenance and control of the membrane surface charge. Plays a role in the formation of the tubular membrane structure and in membrane trafficking and is specifically involved in the recycling and degradation of endocytic cargo, likely with its chaperone protein chat-1. The chain is Phospholipid-transporting ATPase tat-1 (tat-1) from Caenorhabditis elegans.